Here is a 483-residue protein sequence, read N- to C-terminus: FAD-dependent oxidoreductase oblC (483 aa).

Residues 1–21 form the signal peptide; it reads MRSVTSLVSFSACLLASSVTA. N100, N137, N190, and N240 each carry an N-linked (GlcNAc...) asparagine glycan.

The protein belongs to the beta-cyclopiazonate dehydrogenase family. FAD is required as a cofactor.

The protein operates within secondary metabolite biosynthesis; terpenoid biosynthesis. Its function is as follows. FAD-dependent oxidoreductase; part of the gene cluster that mediates the biosynthesis of the sesterterpenes ophiobolins, fungal phytotoxins with potential anti-cancer activities. The first step of the pathway is performed by the sesterterpene synthase oblA that possesses both prenyl transferase and terpene cyclase activity, converting isopentenyl diphosphate and dimethylallyl diphosphate into geranylfarnesyl diphosphate (GFPP) and further converting GFPP into ophiobolin F, respectively. Other sesterterpenoids (C(25) terpenoids) are found as minor products of oblA. The cytochrome P450 monooxygenase oblB then catalyzes a four-step oxidative transformation of ophiobolin F to yield ophiobolin C. The FAD-dependent oxidoreductase oblC might be involved in a later oxidation step that produces ophiobolin A. In Cochliobolus heterostrophus (strain C5 / ATCC 48332 / race O) (Southern corn leaf blight fungus), this protein is FAD-dependent oxidoreductase oblC.